Here is a 516-residue protein sequence, read N- to C-terminus: Probable fucosyltransferase 8 (516 aa).

Residues Ile-5 to Phe-25 form a helical; Signal-anchor for type II membrane protein membrane-spanning segment. The Lumenal segment spans residues Asn-26–Asn-516. 5 N-linked (GlcNAc...) asparagine glycosylation sites follow: Asn-35, Asn-116, Asn-211, Asn-362, and Asn-463.

It belongs to the glycosyltransferase 37 family. In terms of tissue distribution, expressed in leaves and stems.

It is found in the golgi apparatus. It localises to the golgi stack membrane. The protein operates within protein modification; protein glycosylation. Functionally, may be involved in cell wall biosynthesis. May act as a fucosyltransferase. The polypeptide is Probable fucosyltransferase 8 (FUT8) (Arabidopsis thaliana (Mouse-ear cress)).